A 186-amino-acid polypeptide reads, in one-letter code: dCTP deaminase (186 aa).

A dCTP-binding site is contributed by 107 to 112; that stretch reads KSTYAR. The Proton donor/acceptor role is filled by glutamate 133. Glutamine 152, tyrosine 166, and glutamine 176 together coordinate dCTP.

The protein belongs to the dCTP deaminase family. In terms of assembly, homotrimer.

The catalysed reaction is dCTP + H2O + H(+) = dUTP + NH4(+). The protein operates within pyrimidine metabolism; dUMP biosynthesis; dUMP from dCTP (dUTP route): step 1/2. In terms of biological role, catalyzes the deamination of dCTP to dUTP. This chain is dCTP deaminase, found in Campylobacter jejuni subsp. jejuni serotype O:6 (strain 81116 / NCTC 11828).